Reading from the N-terminus, the 309-residue chain is MRIIFLGSPSYAVHALDALVAAGYTIVGVVTQPDRPAGRDRRLTPPPVKVAALAHGLPVLQPETLRDPEVVETLRALQPDVGVVAAYGEILRRAVLEIPPLGYLNIHPSLLPLYRGPTPVAGAILAGETVTGVTIMRLDPGMDSGPILAQAMVDLPPNARTGPLTDELFRLGATLLVEVLPRYARGEIELRPQDHSQATVTKMLKKEDGRIDWTLPAIVIERMTRAYDPWPSAYTFWRGQMLRIMSAAVAPTDASATPGMVIGRSAHGHPLVQTGSDALELVEVQPASRRPMSGAAWLAGVHAPEITLG.

109–112 lines the (6S)-5,6,7,8-tetrahydrofolate pocket; that stretch reads SLLP.

It belongs to the Fmt family.

It catalyses the reaction L-methionyl-tRNA(fMet) + (6R)-10-formyltetrahydrofolate = N-formyl-L-methionyl-tRNA(fMet) + (6S)-5,6,7,8-tetrahydrofolate + H(+). Attaches a formyl group to the free amino group of methionyl-tRNA(fMet). The formyl group appears to play a dual role in the initiator identity of N-formylmethionyl-tRNA by promoting its recognition by IF2 and preventing the misappropriation of this tRNA by the elongation apparatus. This is Methionyl-tRNA formyltransferase from Chloroflexus aggregans (strain MD-66 / DSM 9485).